The following is a 597-amino-acid chain: Arginine--tRNA ligase (597 aa).

A 'HIGH' region motif is present at residues 124-134 (PNVAKPLHVGH).

Belongs to the class-I aminoacyl-tRNA synthetase family. As to quaternary structure, monomer.

It localises to the cytoplasm. The enzyme catalyses tRNA(Arg) + L-arginine + ATP = L-arginyl-tRNA(Arg) + AMP + diphosphate. The polypeptide is Arginine--tRNA ligase (Agathobacter rectalis (strain ATCC 33656 / DSM 3377 / JCM 17463 / KCTC 5835 / VPI 0990) (Eubacterium rectale)).